Here is a 617-residue protein sequence, read N- to C-terminus: Vitamin B12 transporter BtuB (617 aa).

A signal peptide spans Met-1–Ala-22. The TonB box signature appears at Glu-29–Asn-36. Residues Gln-40 to Arg-154 form the TBDR plug domain. Residues Asp-159–Phe-617 enclose the TBDR beta-barrel domain. Positions Val-600–Phe-617 match the TonB C-terminal box motif.

The protein belongs to the TonB-dependent receptor family. BtuB (TC 1.B.14.3.1) subfamily.

It localises to the cell outer membrane. Its function is as follows. Involved in the active translocation of vitamin B12 (cyanocobalamin) across the outer membrane to the periplasmic space. It derives its energy for transport by interacting with the trans-periplasmic membrane protein TonB. This is Vitamin B12 transporter BtuB from Vibrio campbellii (strain ATCC BAA-1116).